The following is a 331-amino-acid chain: Olfactory receptor 7D11 (331 aa).

The Extracellular portion of the chain corresponds to 1-25; sequence MEIENHTLITKFLILGLSDDPELQP. The N-linked (GlcNAc...) asparagine glycan is linked to asparagine 5. The chain crosses the membrane as a helical span at residues 26 to 46; that stretch reads ILFGLFLSMYLVTLLGNLLII. The Cytoplasmic segment spans residues 47 to 57; that stretch reads LAVSSDSHLHK. Residues 58–78 form a helical membrane-spanning segment; that stretch reads PMYFLLSNLSFIDICFISTTI. Over 79-97 the chain is Extracellular; the sequence is PKMLVNMQSQIKDISYIEC. Residues cysteine 97 and cysteine 179 are joined by a disulfide bond. The helical transmembrane segment at 98–118 threads the bilayer; that stretch reads LTQVFFFNIFAGMDNFLLTLM. The Cytoplasmic portion of the chain corresponds to 119–142; that stretch reads AYDRFVAICHPLNYTVIMNPRLCA. A helical transmembrane segment spans residues 143-163; it reads LLILMFWIIMFWVSLIHVLLM. The Extracellular segment spans residues 164–196; that stretch reads NELNFSRGTEIPHFFCELAQVLKVSNSDNHVNN. N-linked (GlcNAc...) asparagine glycosylation occurs at asparagine 167. A helical membrane pass occupies residues 197–217; it reads VFMYVVTSLLGVIPMTGILMS. The Cytoplasmic segment spans residues 218–244; that stretch reads YSQIFSSLFRMSSTVSKYKAFSTCGSH. Residues 245 to 265 form a helical membrane-spanning segment; the sequence is LCVVTLFYGSGFGVYFSSSVV. At 266–271 the chain is on the extracellular side; sequence HSTQRR. Residues 272–292 form a helical membrane-spanning segment; it reads KVASLMYTVISPMLNPFIYTL. Residues 293-331 are Cytoplasmic-facing; sequence RNKDVKGALGKLFNRVASSPSCINDIRNKLLLRSVRQIL.

Belongs to the G-protein coupled receptor 1 family.

It is found in the cell membrane. Functionally, possible olfactory or taste receptor. This is Olfactory receptor 7D11 from Mus musculus (Mouse).